A 341-amino-acid chain; its full sequence is Putative UPF0607 protein ENSP00000381514 (341 aa).

The span at 78-89 (AEEPKEATEVKD) shows a compositional bias: basic and acidic residues. Disordered stretches follow at residues 78-131 (AEEP…NPRP) and 216-282 (GLLT…KLPC). Residues 108–127 (EAASTSRPLETQGNLTSSWY) show a composition bias toward polar residues. The segment covering 243 to 252 (AGHRSRKRKL) has biased composition (basic residues).

Belongs to the UPF0607 family.

This Homo sapiens (Human) protein is Putative UPF0607 protein ENSP00000381514.